A 288-amino-acid chain; its full sequence is Solute carrier family 25 member 45 (288 aa).

Solcar repeat units follow at residues 1 to 83 (MPVE…TLLV), 97 to 191 (PSYM…LCRQ), and 199 to 286 (PSSA…LLRW). 6 helical membrane passes run 6–26 (FVAG…FDTV), 63–83 (IASI…TLLV), 100–120 (MHIF…LAPF), 166–186 (GAWA…ITYE), 202–222 (ATVL…ATPL), and 266–286 (SARA…LLRW).

It belongs to the mitochondrial carrier (TC 2.A.29) family.

The protein localises to the mitochondrion inner membrane. In Homo sapiens (Human), this protein is Solute carrier family 25 member 45 (SLC25A45).